We begin with the raw amino-acid sequence, 256 residues long: Probable hydroxyacylglutathione hydrolase SPCC13B11.03c (256 aa).

Histidine 63, histidine 65, aspartate 67, histidine 68, histidine 118, and aspartate 139 together coordinate Zn(2+). Residues arginine 148–phenylalanine 150, histidine 178–tyrosine 180, and arginine 250–lysine 253 each bind substrate. Position 178 (histidine 178) interacts with Zn(2+).

The protein belongs to the metallo-beta-lactamase superfamily. Glyoxalase II family. Zn(2+) serves as cofactor.

Its subcellular location is the cytoplasm. The protein resides in the nucleus. The enzyme catalyses an S-(2-hydroxyacyl)glutathione + H2O = a 2-hydroxy carboxylate + glutathione + H(+). The catalysed reaction is (R)-S-lactoylglutathione + H2O = (R)-lactate + glutathione + H(+). It participates in secondary metabolite metabolism; methylglyoxal degradation; (R)-lactate from methylglyoxal: step 2/2. Its function is as follows. Thiolesterase that catalyzes the hydrolysis of S-D-lactoylglutathione to form glutathione and D-lactic acid. Involved in the metabolism of methylglyoxal, a toxic compound for yeast proliferation, by converting methylglyoxal to lactate via S-D-lactoylglutathione by sequential enzyme reactions catalyzed by glyoxalase I and glyoxalase II. This chain is Probable hydroxyacylglutathione hydrolase SPCC13B11.03c, found in Schizosaccharomyces pombe (strain 972 / ATCC 24843) (Fission yeast).